A 237-amino-acid polypeptide reads, in one-letter code: Large ribosomal subunit protein uL1 (237 aa).

It belongs to the universal ribosomal protein uL1 family. In terms of assembly, part of the 50S ribosomal subunit.

Functionally, binds directly to 23S rRNA. The L1 stalk is quite mobile in the ribosome, and is involved in E site tRNA release. In terms of biological role, protein L1 is also a translational repressor protein, it controls the translation of the L11 operon by binding to its mRNA. This Nocardia farcinica (strain IFM 10152) protein is Large ribosomal subunit protein uL1.